We begin with the raw amino-acid sequence, 144 residues long: 3-dehydroquinate dehydratase (144 aa).

The active-site Proton acceptor is tyrosine 23. The substrate site is built by asparagine 74, histidine 80, and aspartate 87. The active-site Proton donor is histidine 100. Substrate is bound by residues 101-102 (LS) and arginine 111.

Belongs to the type-II 3-dehydroquinase family. As to quaternary structure, homododecamer.

It catalyses the reaction 3-dehydroquinate = 3-dehydroshikimate + H2O. The protein operates within metabolic intermediate biosynthesis; chorismate biosynthesis; chorismate from D-erythrose 4-phosphate and phosphoenolpyruvate: step 3/7. Functionally, catalyzes a trans-dehydration via an enolate intermediate. This chain is 3-dehydroquinate dehydratase, found in Hydrogenovibrio crunogenus (strain DSM 25203 / XCL-2) (Thiomicrospira crunogena).